The primary structure comprises 377 residues: Mannan endo-1,4-beta-mannosidase A (377 aa).

The signal sequence occupies residues 1–18 (MKLSHMLLSLASLGVATA). W84 is a binding site for substrate. Residue N105 is glycosylated (N-linked (GlcNAc...) asparagine). N197 lines the substrate pocket. E198 functions as the Proton donor in the catalytic mechanism. N255 carries an N-linked (GlcNAc...) asparagine glycan. Y273 lines the substrate pocket. E306 serves as the catalytic Nucleophile. N326 is a glycosylation site (N-linked (GlcNAc...) asparagine). Residue W336 coordinates substrate. The N-linked (GlcNAc...) asparagine glycan is linked to N357.

Belongs to the glycosyl hydrolase 5 (cellulase A) family.

The protein localises to the secreted. It catalyses the reaction Random hydrolysis of (1-&gt;4)-beta-D-mannosidic linkages in mannans, galactomannans and glucomannans.. Functionally, endo-1,4-mannanase, a crucial enzyme for depolymerization of seed galactomannans and wood galactoglucomannans. This is Mannan endo-1,4-beta-mannosidase A (manA) from Aspergillus aculeatus.